The following is a 113-amino-acid chain: MSVSVFSVVSRFLDEYVSSTPQRLKLLDAYLLYILLTGALQFLYCLLVGTFPFNSFLSGFISSVGSFILAVCLRIQINPQNKSDFQGISPERAFADFLFANTILHLVVVNFIG.

The Cytoplasmic segment spans residues 1-30 (MSVSVFSVVSRFLDEYVSSTPQRLKLLDAY). Residues 31–51 (LLYILLTGALQFLYCLLVGTF) traverse the membrane as a helical segment. A topological domain (lumenal) is located at residue P52. The chain crosses the membrane as a helical span at residues 53-73 (FNSFLSGFISSVGSFILAVCL). Topologically, residues 74–92 (RIQINPQNKSDFQGISPER) are cytoplasmic. The helical transmembrane segment at 93-113 (AFADFLFANTILHLVVVNFIG) threads the bilayer.

This sequence belongs to the DAD/OST2 family. As to quaternary structure, component of the oligosaccharyltransferase (OST) complex.

The protein resides in the endoplasmic reticulum membrane. The protein operates within protein modification; protein glycosylation. Functionally, subunit of the oligosaccharyl transferase (OST) complex that catalyzes the initial transfer of a defined glycan (Glc(3)Man(9)GlcNAc(2) in eukaryotes) from the lipid carrier dolichol-pyrophosphate to an asparagine residue within an Asn-X-Ser/Thr consensus motif in nascent polypeptide chains, the first step in protein N-glycosylation. N-glycosylation occurs cotranslationally and the complex associates with the Sec61 complex at the channel-forming translocon complex that mediates protein translocation across the endoplasmic reticulum (ER). All subunits are required for a maximal enzyme activity. The chain is Dolichyl-diphosphooligosaccharide--protein glycosyltransferase subunit dad1 from Xenopus laevis (African clawed frog).